A 525-amino-acid chain; its full sequence is uncharacterized protein (525 aa).

Ser55 is subject to Phosphoserine. 13 helical membrane-spanning segments follow: residues 81–101 (AYIV…PNFY), 120–140 (LLGQ…LGPL), 147–167 (KLVY…CALA), 173–193 (LVIS…NVAG), 208–228 (MYMF…GTGV), 238–258 (WLYW…VFTP), 295–315 (FVFF…SLGI), 318–338 (GFVN…YFSI), 350–370 (YMAA…QCWL), 388–408 (FIMT…FAFC), 413–433 (IHYI…YHIW), 454–474 (AFEL…ALMF), and 484–504 (AVVG…YFYG).

This sequence belongs to the major facilitator superfamily. CAR1 family.

The protein localises to the membrane. This is an uncharacterized protein from Schizosaccharomyces pombe (strain 972 / ATCC 24843) (Fission yeast).